We begin with the raw amino-acid sequence, 164 residues long: MTGAVCPGSFDPVTNGHLDVIGRAAAQFDEVIVTVMVNKSKRGLFTVEERIEMLEDSTSELPNVRVSSWHGLLVDYAKQQGITAIVKGLRGANDFDYELQMAQMNQKLSGVDTLFIPTNPTYSYLSSSLVKEVATFGGDVSDMLPEKVHARLLARIAERAAESS.

Position 9 (S9) interacts with substrate. ATP contacts are provided by residues 9 to 10 and H17; that span reads SF. K41, L73, and K87 together coordinate substrate. ATP is bound by residues 88–90, E98, and 122–128; these read GLR and YSYLSSS.

Belongs to the bacterial CoaD family. As to quaternary structure, homohexamer. Requires Mg(2+) as cofactor.

Its subcellular location is the cytoplasm. The enzyme catalyses (R)-4'-phosphopantetheine + ATP + H(+) = 3'-dephospho-CoA + diphosphate. It functions in the pathway cofactor biosynthesis; coenzyme A biosynthesis; CoA from (R)-pantothenate: step 4/5. Functionally, reversibly transfers an adenylyl group from ATP to 4'-phosphopantetheine, yielding dephospho-CoA (dPCoA) and pyrophosphate. The polypeptide is Phosphopantetheine adenylyltransferase (Rhodococcus jostii (strain RHA1)).